The sequence spans 471 residues: Glutamate--tRNA ligase (471 aa).

The 'HIGH' region signature appears at Pro-9–Gly-19. Positions 98, 100, 125, and 127 each coordinate Zn(2+). The short motif at Lys-237–Arg-241 is the 'KMSKS' region element. Residue Lys-240 coordinates ATP.

It belongs to the class-I aminoacyl-tRNA synthetase family. Glutamate--tRNA ligase type 1 subfamily. Monomer. It depends on Zn(2+) as a cofactor.

It is found in the cytoplasm. The enzyme catalyses tRNA(Glu) + L-glutamate + ATP = L-glutamyl-tRNA(Glu) + AMP + diphosphate. Catalyzes the attachment of glutamate to tRNA(Glu) in a two-step reaction: glutamate is first activated by ATP to form Glu-AMP and then transferred to the acceptor end of tRNA(Glu). The protein is Glutamate--tRNA ligase of Salmonella dublin (strain CT_02021853).